We begin with the raw amino-acid sequence, 188 residues long: Pyridoxal 5'-phosphate synthase subunit PdxT (188 aa).

Residue 46-48 coordinates L-glutamine; the sequence is GES. Catalysis depends on Cys-78, which acts as the Nucleophile. Residues Arg-105 and 133 to 134 each bind L-glutamine; that span reads IR. Residues His-169 and Glu-171 each act as charge relay system in the active site.

It belongs to the glutaminase PdxT/SNO family. In the presence of PdxS, forms a dodecamer of heterodimers. Only shows activity in the heterodimer.

The enzyme catalyses aldehydo-D-ribose 5-phosphate + D-glyceraldehyde 3-phosphate + L-glutamine = pyridoxal 5'-phosphate + L-glutamate + phosphate + 3 H2O + H(+). The catalysed reaction is L-glutamine + H2O = L-glutamate + NH4(+). Its pathway is cofactor biosynthesis; pyridoxal 5'-phosphate biosynthesis. Functionally, catalyzes the hydrolysis of glutamine to glutamate and ammonia as part of the biosynthesis of pyridoxal 5'-phosphate. The resulting ammonia molecule is channeled to the active site of PdxS. This chain is Pyridoxal 5'-phosphate synthase subunit PdxT, found in Thermosipho africanus (strain TCF52B).